The sequence spans 427 residues: 3-phosphoshikimate 1-carboxyvinyltransferase (427 aa).

Residues Lys-20, Ser-21, and Arg-25 each coordinate 3-phosphoshikimate. Position 20 (Lys-20) interacts with phosphoenolpyruvate. Positions 92 and 120 each coordinate phosphoenolpyruvate. 3-phosphoshikimate is bound by residues Ser-166, Gln-168, Asp-312, and Lys-339. Gln-168 serves as a coordination point for phosphoenolpyruvate. The Proton acceptor role is filled by Asp-312. Phosphoenolpyruvate is bound by residues Arg-343 and Arg-385.

This sequence belongs to the EPSP synthase family. In terms of assembly, monomer.

The protein resides in the cytoplasm. It catalyses the reaction 3-phosphoshikimate + phosphoenolpyruvate = 5-O-(1-carboxyvinyl)-3-phosphoshikimate + phosphate. The protein operates within metabolic intermediate biosynthesis; chorismate biosynthesis; chorismate from D-erythrose 4-phosphate and phosphoenolpyruvate: step 6/7. In terms of biological role, catalyzes the transfer of the enolpyruvyl moiety of phosphoenolpyruvate (PEP) to the 5-hydroxyl of shikimate-3-phosphate (S3P) to produce enolpyruvyl shikimate-3-phosphate and inorganic phosphate. The chain is 3-phosphoshikimate 1-carboxyvinyltransferase from Streptococcus thermophilus (strain CNRZ 1066).